Consider the following 593-residue polypeptide: Arginine--tRNA ligase (593 aa).

Positions 138–148 (ANPTGPLHVGH) match the 'HIGH' region motif.

The protein belongs to the class-I aminoacyl-tRNA synthetase family. As to quaternary structure, monomer.

The protein localises to the cytoplasm. The catalysed reaction is tRNA(Arg) + L-arginine + ATP = L-arginyl-tRNA(Arg) + AMP + diphosphate. In Burkholderia orbicola (strain MC0-3), this protein is Arginine--tRNA ligase.